The sequence spans 211 residues: MAVIAVIDYDMGNLHSACKGLENAGATPKITDSARDIEQADAIVLPGVGSFDPAVYHLRSRDLEAPLKDAIASGKPFLGICLGLQILFDASEEGSQPGLGIISGVVRRFRSEPGLTIPHMGWNQLEYTQANLPLWQELPFNPYVYFVHSYYVDPIDPSVRAATVTHGSQKVTAAIAKDNIMAVQFHPEKSSSNGLKILSNFVNQIRVKAIA.

Positions 3–211 (VIAVIDYDMG…VNQIRVKAIA (209 aa)) constitute a Glutamine amidotransferase type-1 domain. Catalysis depends on cysteine 81, which acts as the Nucleophile. Residues histidine 186 and glutamate 188 contribute to the active site.

In terms of assembly, heterodimer of HisH and HisF.

The protein resides in the cytoplasm. The catalysed reaction is 5-[(5-phospho-1-deoxy-D-ribulos-1-ylimino)methylamino]-1-(5-phospho-beta-D-ribosyl)imidazole-4-carboxamide + L-glutamine = D-erythro-1-(imidazol-4-yl)glycerol 3-phosphate + 5-amino-1-(5-phospho-beta-D-ribosyl)imidazole-4-carboxamide + L-glutamate + H(+). It carries out the reaction L-glutamine + H2O = L-glutamate + NH4(+). It participates in amino-acid biosynthesis; L-histidine biosynthesis; L-histidine from 5-phospho-alpha-D-ribose 1-diphosphate: step 5/9. IGPS catalyzes the conversion of PRFAR and glutamine to IGP, AICAR and glutamate. The HisH subunit catalyzes the hydrolysis of glutamine to glutamate and ammonia as part of the synthesis of IGP and AICAR. The resulting ammonia molecule is channeled to the active site of HisF. The polypeptide is Imidazole glycerol phosphate synthase subunit HisH (Gloeothece citriformis (strain PCC 7424) (Cyanothece sp. (strain PCC 7424))).